Consider the following 219-residue polypeptide: Histone H1.01 (219 aa).

Composition is skewed to low complexity over residues 1 to 19 (MSET…GAKA) and 27 to 39 (AAGG…PAGP). Disordered stretches follow at residues 1–40 (MSET…AGPS) and 94–219 (LVQT…AKKK). Ser2 is modified (N-acetylserine). Residues 37–110 (AGPSVTELIT…GASGSFRLNK (74 aa)) enclose the H15 domain. 4 stretches are compositionally biased toward basic residues: residues 119-134 (APRK…KPAA), 142-159 (KKPK…KAKK), 167-185 (KAAK…KKAA), and 192-219 (KAVK…AKKK).

The protein belongs to the histone H1/H5 family.

The protein resides in the nucleus. The protein localises to the chromosome. Histones H1 are necessary for the condensation of nucleosome chains into higher-order structures. The protein is Histone H1.01 of Gallus gallus (Chicken).